Reading from the N-terminus, the 519-residue chain is ATP synthase subunit alpha, mitochondrial (519 aa).

188 to 195 (GDRQTGKS) lines the ATP pocket.

This sequence belongs to the ATPase alpha/beta chains family. As to quaternary structure, F-type ATPases have 2 components, CF(1) - the catalytic core - and CF(0) - the membrane proton channel. CF(1) has five subunits: alpha(3), beta(3), gamma(1), delta(1), epsilon(1). CF(0) has three main subunits: a, b and c.

Its subcellular location is the mitochondrion. It localises to the mitochondrion inner membrane. Mitochondrial membrane ATP synthase (F(1)F(0) ATP synthase or Complex V) produces ATP from ADP in the presence of a proton gradient across the membrane which is generated by electron transport complexes of the respiratory chain. F-type ATPases consist of two structural domains, F(1) - containing the extramembraneous catalytic core, and F(0) - containing the membrane proton channel, linked together by a central stalk and a peripheral stalk. During catalysis, ATP synthesis in the catalytic domain of F(1) is coupled via a rotary mechanism of the central stalk subunits to proton translocation. Subunits alpha and beta form the catalytic core in F(1). Rotation of the central stalk against the surrounding alpha(3)beta(3) subunits leads to hydrolysis of ATP in three separate catalytic sites on the beta subunits. Subunit alpha does not bear the catalytic high-affinity ATP-binding sites. The sequence is that of ATP synthase subunit alpha, mitochondrial (atp1) from Dictyostelium citrinum (Slime mold).